Consider the following 213-residue polypeptide: Outer envelope pore protein 24B, chloroplastic (213 aa).

At 1-3 (MAM) the chain is on the cytoplasmic side. The beta stranded transmembrane segment at 4 to 13 (KASIKGKYDT) threads the bilayer. Topologically, residues 14-18 (DKTSG) are chloroplast intermembrane. A beta stranded membrane pass occupies residues 19–28 (IGSLAFNAGD). Residues 29–32 (IKLR) lie on the Cytoplasmic side of the membrane. A beta stranded membrane pass occupies residues 33-42 (ATMTDATLVA). Residues 43–55 (GPTLTGLALAVEK) lie on the Chloroplast intermembrane side of the membrane. The chain crosses the membrane as a beta stranded span at residues 56–64 (PGSFIVEYN). Topologically, residues 65–70 (VPKKDV) are cytoplasmic. Residues 71-80 (RFQFMNTVRI) traverse the membrane as a beta stranded segment. Residues 81–93 (AEKPLNLTYIHSR) lie on the Chloroplast intermembrane side of the membrane. Residues 94–103 (ADNRTIVDGS) traverse the membrane as a beta stranded segment. Over 104–108 (LVIDS) the chain is Cytoplasmic. The beta stranded transmembrane segment at 109 to 118 (ANKLSANHMV) threads the bilayer. The Chloroplast intermembrane portion of the chain corresponds to 119 to 122 (GTNN). Residues 123 to 132 (CKIKYTYAHG) traverse the membrane as a beta stranded segment. Over 133-144 (GLATFEPCYDLA) the chain is Cytoplasmic. The beta stranded transmembrane segment at 145-156 (KNTWDFAVSRRF) threads the bilayer. Residues 157 to 159 (YSG) lie on the Chloroplast intermembrane side of the membrane. The chain crosses the membrane as a beta stranded span at residues 160-168 (DNVRATYQT). Residues 169-170 (SS) are Cytoplasmic-facing. Residues 171–179 (KLLGMEWSR) form a beta stranded membrane-spanning segment. The Chloroplast intermembrane segment spans residues 180–201 (NNKASGFKVCASVNLADELKTP). A beta stranded membrane pass occupies residues 202–211 (KLTAETTWNL). Residues 212–213 (EM) lie on the Cytoplasmic side of the membrane.

It belongs to the plastid outer envelope porin OEP24 (TC 1.B.28) family. Homooligomers form large rather nonselective pores in plastidial outer membranes.

It is found in the plastid. The protein resides in the etioplast membrane. Its subcellular location is the chloroplast outer membrane. Functionally, high-conductance voltage-dependent solute channel with a slight selectivity for cations transporting triosephosphates, dicarboxylic acids, ATP, inorganic phosphate (Pi), sugars, and positively or negatively charged amino acids. This chain is Outer envelope pore protein 24B, chloroplastic (OEP24B), found in Arabidopsis thaliana (Mouse-ear cress).